The primary structure comprises 406 residues: Cysteine desulfurase (406 aa).

N6-(pyridoxal phosphate)lysine is present on lysine 226. Cysteine 364 (cysteine persulfide intermediate) is an active-site residue.

The protein belongs to the class-V pyridoxal-phosphate-dependent aminotransferase family. Csd subfamily. In terms of assembly, homodimer. Interacts with SufE and the SufBCD complex composed of SufB, SufC and SufD. The interaction with SufE is required to mediate the direct transfer of the sulfur atom from the S-sulfanylcysteine. The cofactor is pyridoxal 5'-phosphate.

The protein localises to the cytoplasm. The enzyme catalyses (sulfur carrier)-H + L-cysteine = (sulfur carrier)-SH + L-alanine. The catalysed reaction is L-selenocysteine + AH2 = hydrogenselenide + L-alanine + A + H(+). The protein operates within cofactor biosynthesis; iron-sulfur cluster biosynthesis. Its function is as follows. Cysteine desulfurases mobilize the sulfur from L-cysteine to yield L-alanine, an essential step in sulfur metabolism for biosynthesis of a variety of sulfur-containing biomolecules. Component of the suf operon, which is activated and required under specific conditions such as oxidative stress and iron limitation. Acts as a potent selenocysteine lyase in vitro, that mobilizes selenium from L-selenocysteine. Selenocysteine lyase activity is however unsure in vivo. This chain is Cysteine desulfurase, found in Escherichia coli O127:H6 (strain E2348/69 / EPEC).